Reading from the N-terminus, the 179-residue chain is MEKIIIDHDRFLRTISRISHEIIEKHQTLDDLVIVGIKRRGAEIAELLQRRVEELSSINLPSMELDITFYRDDLTLVDQEDKMPVYSGSSQYLNIQDKTVILVDDVLFTGRTIRAAMDALTDFGRAAKIELVIFVDRGHRELPIRADYVGKNVPTSRDELVQVRTEKQDGCYEVAILGK.

Substrate-binding positions include 39-40 (RR), 104-112 (DDVLFTGRT), R137, and V161. The PRPP-binding signature appears at 100 to 112 (VILVDDVLFTGRT).

It belongs to the purine/pyrimidine phosphoribosyltransferase family. PyrR subfamily.

The catalysed reaction is UMP + diphosphate = 5-phospho-alpha-D-ribose 1-diphosphate + uracil. Functionally, regulates the transcription of the pyrimidine nucleotide (pyr) operon in response to exogenous pyrimidines. In terms of biological role, also displays a weak uracil phosphoribosyltransferase activity which is not physiologically significant. This Haemophilus influenzae (strain ATCC 51907 / DSM 11121 / KW20 / Rd) protein is Bifunctional protein PyrR (pyrR).